A 274-amino-acid polypeptide reads, in one-letter code: Transmembrane O-methyltransferase (274 aa).

A helical transmembrane segment spans residues 14–34 (VGTMSPAIALAFLPLVVTLLV). Residues Glu-120, 122–123 (GT), Ser-128, Glu-146, and Ser-176 contribute to the S-adenosyl-L-methionine site.

The protein belongs to the class I-like SAM-binding methyltransferase superfamily. Cation-dependent O-methyltransferase family. In terms of assembly, interacts with LHFPL5, PCDH15, TMC1, TMC2 and TMIE. Interacts directly with TMC1. The interaction of TOMT with TMC1 and TMC2 is required for the transportation of TMC1/2 into the stereocilia of hair cells.

The protein resides in the membrane. Its subcellular location is the cytoplasm. The protein localises to the endoplasmic reticulum. It catalyses the reaction a catechol + S-adenosyl-L-methionine = a guaiacol + S-adenosyl-L-homocysteine + H(+). Functionally, catalyzes the O-methylation, and thereby the inactivation, of catecholamine neurotransmitters and catechol hormones. Required for auditory function. Component of the cochlear hair cell's mechanotransduction (MET) machinery. Involved in the assembly of the asymmetric tip-link MET complex. Required for transportation of TMC1 and TMC2 proteins into the mechanically sensitive stereocilia of the hair cells. The function in MET is independent of the enzymatic activity. This Propithecus coquereli (Coquerel's sifaka) protein is Transmembrane O-methyltransferase.